The primary structure comprises 216 residues: Ras-related protein RABA1a (216 aa).

20-27 (GDSGVGKS) contributes to the GTP binding site. The Effector region signature appears at 42 to 50 (SKSTIGVEF). Residues 68 to 72 (DTAGQ), 126 to 129 (NKCD), and 156 to 157 (SA) contribute to the GTP site. 2 S-geranylgeranyl cysteine lipidation sites follow: C213 and C214.

This sequence belongs to the small GTPase superfamily. Rab family.

Its subcellular location is the cell membrane. Its function is as follows. Involved in auxin-mediated response. May be involved in vesicle trafficking of components involved in polar auxin transport. Binds GTP and GDP and possesses intrinsic GTPase activity. The sequence is that of Ras-related protein RABA1a (RABA1A) from Arabidopsis thaliana (Mouse-ear cress).